A 580-amino-acid chain; its full sequence is Methyl-CpG-binding domain protein 4 (580 aa).

The segment at Met-1–Lys-36 is disordered. Residues Ala-76–Lys-148 form the MBD domain. 2 positions are modified to phosphoserine: Ser-318 and Ser-428. Asp-560 is a catalytic residue.

Interacts with MLH1.

The protein resides in the nucleus. Its function is as follows. Mismatch-specific DNA N-glycosylase involved in DNA repair. Has thymine glycosylase activity and is specific for G:T mismatches within methylated and unmethylated CpG sites. Can also remove uracil or 5-fluorouracil in G:U mismatches. Has no lyase activity. Was first identified as methyl-CpG-binding protein. This chain is Methyl-CpG-binding domain protein 4, found in Homo sapiens (Human).